A 940-amino-acid polypeptide reads, in one-letter code: MEEDEFSKAYDPKGLEDKLYAFWEGSGMFTAQSASDKPPYAIIMPPPNVTGILHMGHALVNTLQDVLIRYKRMSGFEVCWVPGTDHAGIATQTVVERHLYASLGKRRIDFSREEFIKHVWEWKEKSEGVILSQLRQLGCSCDWSRLRFTMEPLANRAVKKAFKALFDKGHIYRGYYLVNWDPVLQTALADDEVEYEEKDGWLYYIRYKVVDSSEEIIVATTRPETLLGDTAIAISPDDERYSHLLGAKVHLPFVDREIPIIGDMSVDPLFGTGAVKITPAHDRDDYRTGINHNLPMVNILAPTGEINENGGIFAGLSKEKAREDIITALEAMGLFVKKEPYKLRVGVSYRSGAVIEPYLSKQWFVSVESFRDSLREFVANDSIKIFPPEFTRNYLSWVNNLRDWCISRQLWWGHRIPVWYHKSDEDRILCYDGEGIPEEVAQDPDSWYQDPDVLDTWFSSGLWPLTCLGWPDVESGDLEKFYPTAVLITGHDILFFWVTRMVLLCSAMVEEKPFSDVFLHGLIFGKSYKRYNDLGEWTYISGEEKHAYDMGKALPKDVVAKWEKLSKSKGNVIDPLEMIGKYGADAVRMTLCSCANRGEQIDLDYRLFEEYKNFANKIWNGARFIFGHISNLTSKDLVYGIDKDLLGLEDFYILDGFNQLLKQLESAYQSYAFDKITTMAYEFFRNDFCSTYIEIIKPTLYGKQGNEEDRLTKQKLLAVLLVNILGVLHPITPFVTETLFLKLKATLGDVDAPCADTITAHALDMLRAESYVVAPYPQAIDIAIPKDLHESFALAERLVYTIRNIRGEMQLDPRASLEVFVICPEGISIETYVPMMCALGGIASLEYLSEEPKDRVYSLGVVEGIRLGVFVPMEHITKERNRLEKEKMRLENSIESVSRLLSSESFRAKANPDLVRSKEETLKNNRMELQSILDKLASFS.

The 'HIGH' region signature appears at 47-57 (PNVTGILHMGH). The short motif at 564–568 (KLSKS) is the 'KMSKS' region element. K567 contacts ATP. Residues 872-938 (PMEHITKERN…LQSILDKLAS (67 aa)) adopt a coiled-coil conformation.

Belongs to the class-I aminoacyl-tRNA synthetase family. ValS type 1 subfamily. Monomer.

The protein localises to the cytoplasm. The enzyme catalyses tRNA(Val) + L-valine + ATP = L-valyl-tRNA(Val) + AMP + diphosphate. Its function is as follows. Catalyzes the attachment of valine to tRNA(Val). As ValRS can inadvertently accommodate and process structurally similar amino acids such as threonine, to avoid such errors, it has a 'posttransfer' editing activity that hydrolyzes mischarged Thr-tRNA(Val) in a tRNA-dependent manner. The sequence is that of Valine--tRNA ligase from Chlamydia caviae (strain ATCC VR-813 / DSM 19441 / 03DC25 / GPIC) (Chlamydophila caviae).